Here is a 633-residue protein sequence, read N- to C-terminus: MINISFPDGSVKQFEKNITAFEIAVVISTSLAKAAMIAEINGDLKDLSTQIDNDCRLRILTAKDPECLEVIRHDAAHLTAEAVKELFPETQVTIGPAIENGYYYDFARDKPFTTDDLAVIEAKMHELAKKNEKVTRELWDREKAVEFFKSIGEHYKAEIIASIPSNEPISLYRQGNFIDLCRGPHAPSTGFVKHFKLMKVAGAYWRGDSRNEVLQRIYGTAWATKEQLESYLFMLEEAEKRDHRKLGKELDLFHFQEEAQGMVFWHDKGWSVYNTIEQYIRRKIRKNGYIEVKTPVLVDKSLWELSGHWEKFRDDMFALETDDKTLALKPMNCPCHVQIFKQGIKSYRDLPLRMSEFGLCHRNEASGALHGLMRVRSLVQDDAHIFCAEEQITDETVSFCKLLTEVYKDFGFTDIKVKFSDRPEVRAGSSETWDKAENALKEAVEKAGYSYTLNPGEGAFYGPKLEFVLTDAIGRQWQCGTLQMDFVLPERLDASYVAASGEKKRPVMLHRAILGSLERFIGILIEEYAGRFPLWLAPVQVAIATITSDLNDYALEVQKALIESGVRVDINISPDKINYKIREFSNQKVPMIAVIGKQEKENKQVTIRRLGTTEQEVLSIEQLIEYIREENSK.

Positions 1–61 constitute a TGS domain; the sequence is MINISFPDGS…DNDCRLRILT (61 aa). The catalytic stretch occupies residues 242–533; the sequence is DHRKLGKELD…LIEEYAGRFP (292 aa). Zn(2+) is bound by residues C333, H384, and H510.

It belongs to the class-II aminoacyl-tRNA synthetase family. In terms of assembly, homodimer. Requires Zn(2+) as cofactor.

Its subcellular location is the cytoplasm. It carries out the reaction tRNA(Thr) + L-threonine + ATP = L-threonyl-tRNA(Thr) + AMP + diphosphate + H(+). Functionally, catalyzes the attachment of threonine to tRNA(Thr) in a two-step reaction: L-threonine is first activated by ATP to form Thr-AMP and then transferred to the acceptor end of tRNA(Thr). Also edits incorrectly charged L-seryl-tRNA(Thr). The polypeptide is Threonine--tRNA ligase (Rickettsia bellii (strain OSU 85-389)).